Consider the following 1322-residue polypeptide: C-Jun-amino-terminal kinase-interacting protein 3 (1322 aa).

An RH1 domain is found at 12-100 (VVVYQDDYCS…LTQYEREKAL (89 aa)). The segment at 50–80 (EVVKELMPLVVNVLENLDSVLSENQEHEVEL) is kinesin-binding domain (KBD); essential for its function in axon elongation. A coiled-coil region spans residues 66–167 (LDSVLSENQE…KKEYNALHQR (102 aa)). Disordered regions lie at residues 183 to 211 (KMQQ…SLNV) and 245 to 317 (SSSY…NSRN). The tract at residues 210–226 (NVFPLADGMVRAQMGGK) is JNK-binding domain (JBD); essential for its function in axon elongation. Positions 261–270 (SSAAATPSTT) are enriched in low complexity. Residues Thr-266, Thr-276, and Thr-287 each carry the phosphothreonine modification. Polar residues predominate over residues 271 to 282 (GTKSNTPTSSVP). Positions 305 to 315 (NNKRAREKRNS) are enriched in basic residues. 3 positions are modified to phosphoserine: Ser-315, Ser-365, and Ser-366. The leucine zipper-like domain (LZ); essential for its function in axon elongation stretch occupies residues 424-459 (QLLETKNALNVVKNDLIAKVDQLSGEQEVLKGELEA). Residues 443 to 534 (VDQLSGEQEV…KERLMELQEA (92 aa)) are a coiled coil. The segment at 459-515 (AAKQAKVKLENRIKELEEELKRVKSEAVTARREPREEVEDDKIPMAQRRRFTRVEMA) is interaction with NTRK2. One can recognise an RH2 domain in the interval 506–580 (RRRFTRVEMA…SPPPAKRSYP (75 aa)). Residues Ser-588 and Ser-662 each carry the phosphoserine modification. Disordered stretches follow at residues 704–754 (WKPN…EADA), 844–952 (PRSN…TTSS), and 1281–1307 (RIGD…LSKA). A compositionally biased stretch (basic and acidic residues) spans 724–750 (LTCDREGEGEPKSTHPSPEKKKAKEVP). The segment covering 914–937 (APTQSSSTQPASENGSESDGSIVQ) has biased composition (polar residues). Residues 941-952 (EPSGESSATTSS) show a composition bias toward low complexity. Residues 1285-1294 (GEDDETEEGT) are compositionally biased toward acidic residues.

This sequence belongs to the JIP scaffold family. Forms homo- or heterooligomeric complexes. The central region of MAPK8IP3 interacts with the C-terminal of MAPK8IP2 but not MAPK8IP1. Binds specific components of the JNK signaling pathway namely MAPK8/JNK1, MAPK9/JNK2 and MAPK10/JNK3 to the N-terminal region, MAP2K4/MKK4 and MAP2K7/MKK7 to the central region and MAP3K11 to the C-terminal region. Binds the TPR motif-containing C-terminal of kinesin light chain, KLC1. Pre-assembled MAPK8IP1 scaffolding complexes are then transported as a cargo of kinesin, to the required subcellular location. Interacts with ROCK1 and this interaction is enhanced by ultraviolet-B (UVB) radiation. Interacts with SH3RF2. Interacts with NTRK3/TRKC. Interacts with NTRK2/TRKB. Phosphorylation by ROCK1 is crucial for the recruitment of JNK.

Its subcellular location is the cytoplasm. The protein resides in the golgi apparatus. The protein localises to the cytoplasmic vesicle. It is found in the cell projection. It localises to the growth cone. Its subcellular location is the axon. The protein resides in the dendrite. The protein localises to the perinuclear region. The JNK-interacting protein (JIP) group of scaffold proteins selectively mediates JNK signaling by aggregating specific components of the MAPK cascade to form a functional JNK signaling module. May function as a regulator of vesicle transport, through interactions with the JNK-signaling components and motor proteins. Promotes neuronal axon elongation in a kinesin- and JNK-dependent manner. Activates cofilin at axon tips via local activation of JNK, thereby regulating filopodial dynamics and enhancing axon elongation. Its binding to kinesin heavy chains (KHC), promotes kinesin-1 motility along microtubules and is essential for axon elongation and regeneration. Regulates cortical neuronal migration by mediating NTRK2/TRKB anterograde axonal transport during brain development. Acts as an adapter that bridges the interaction between NTRK2/TRKB and KLC1 and drives NTRK2/TRKB axonal but not dendritic anterograde transport, which is essential for subsequent BDNF-triggered signaling and filopodia formation. The sequence is that of C-Jun-amino-terminal kinase-interacting protein 3 (Mapk8ip3) from Rattus norvegicus (Rat).